The following is a 343-amino-acid chain: Protein RecA (343 aa).

65-72 (GPESSGKT) contacts ATP.

This sequence belongs to the RecA family.

The protein localises to the cytoplasm. In terms of biological role, can catalyze the hydrolysis of ATP in the presence of single-stranded DNA, the ATP-dependent uptake of single-stranded DNA by duplex DNA, and the ATP-dependent hybridization of homologous single-stranded DNAs. It interacts with LexA causing its activation and leading to its autocatalytic cleavage. The protein is Protein RecA of Xanthomonas campestris pv. campestris (strain 8004).